Here is a 136-residue protein sequence, read N- to C-terminus: uncharacterized protein (136 aa).

The interval 74–97 (RADPGRKGRTQPLPTQGSARRFLH) is disordered.

This is an uncharacterized protein from Saccharomyces cerevisiae (strain ATCC 204508 / S288c) (Baker's yeast).